Here is a 151-residue protein sequence, read N- to C-terminus: Small ribosomal subunit protein uS11 (151 aa).

Ser16 is modified (phosphoserine). Residues Lys61, Lys63, and Lys106 each participate in a glycyl lysine isopeptide (Lys-Gly) (interchain with G-Cter in SUMO2) cross-link. The interval 131-151 is disordered; sequence DVTPIPSDSTRRKGGRRGRRL. Thr133 is modified (phosphothreonine). Residue Ser139 is modified to Phosphoserine. The span at 142 to 151 shows a compositional bias: basic residues; the sequence is RKGGRRGRRL.

The protein belongs to the universal ribosomal protein uS11 family. Component of the small ribosomal subunit. Part of the small subunit (SSU) processome, composed of more than 70 proteins and the RNA chaperone small nucleolar RNA (snoRNA) U3.

It localises to the cytoplasm. It is found in the nucleus. The protein resides in the nucleolus. Functionally, component of the small ribosomal subunit. The ribosome is a large ribonucleoprotein complex responsible for the synthesis of proteins in the cell. Part of the small subunit (SSU) processome, first precursor of the small eukaryotic ribosomal subunit. During the assembly of the SSU processome in the nucleolus, many ribosome biogenesis factors, an RNA chaperone and ribosomal proteins associate with the nascent pre-rRNA and work in concert to generate RNA folding, modifications, rearrangements and cleavage as well as targeted degradation of pre-ribosomal RNA by the RNA exosome. The sequence is that of Small ribosomal subunit protein uS11 (Rps14) from Mus musculus (Mouse).